A 547-amino-acid polypeptide reads, in one-letter code: Glucose-6-phosphate isomerase (547 aa).

The active-site Proton donor is the Glu-351. Catalysis depends on residues His-382 and Lys-509.

It belongs to the GPI family.

It localises to the cytoplasm. The catalysed reaction is alpha-D-glucose 6-phosphate = beta-D-fructose 6-phosphate. Its pathway is carbohydrate biosynthesis; gluconeogenesis. The protein operates within carbohydrate degradation; glycolysis; D-glyceraldehyde 3-phosphate and glycerone phosphate from D-glucose: step 2/4. Catalyzes the reversible isomerization of glucose-6-phosphate to fructose-6-phosphate. This chain is Glucose-6-phosphate isomerase, found in Coxiella burnetii (strain RSA 493 / Nine Mile phase I).